The chain runs to 152 residues: Xanthine-guanine phosphoribosyltransferase (152 aa).

5-phospho-alpha-D-ribose 1-diphosphate is bound by residues 37 to 38 (RG), Arg-69, and 88 to 96 (DDLVDTGGT). Arg-69 contacts GMP. Mg(2+) is bound at residue Asp-89. Asp-92 and Ile-135 together coordinate guanine. Xanthine is bound by residues Asp-92 and Ile-135. Residues 92–96 (DTGGT) and 134–135 (WI) each bind GMP.

This sequence belongs to the purine/pyrimidine phosphoribosyltransferase family. XGPT subfamily. As to quaternary structure, homotetramer. It depends on Mg(2+) as a cofactor.

The protein localises to the cell inner membrane. The enzyme catalyses GMP + diphosphate = guanine + 5-phospho-alpha-D-ribose 1-diphosphate. It carries out the reaction XMP + diphosphate = xanthine + 5-phospho-alpha-D-ribose 1-diphosphate. The catalysed reaction is IMP + diphosphate = hypoxanthine + 5-phospho-alpha-D-ribose 1-diphosphate. It participates in purine metabolism; GMP biosynthesis via salvage pathway; GMP from guanine: step 1/1. Its pathway is purine metabolism; XMP biosynthesis via salvage pathway; XMP from xanthine: step 1/1. Purine salvage pathway enzyme that catalyzes the transfer of the ribosyl-5-phosphate group from 5-phospho-alpha-D-ribose 1-diphosphate (PRPP) to the N9 position of the 6-oxopurines guanine and xanthine to form the corresponding ribonucleotides GMP (guanosine 5'-monophosphate) and XMP (xanthosine 5'-monophosphate), with the release of PPi. To a lesser extent, also acts on hypoxanthine. The sequence is that of Xanthine-guanine phosphoribosyltransferase from Escherichia coli (strain UTI89 / UPEC).